Reading from the N-terminus, the 207-residue chain is Protein 6b (207 aa).

Residues 161–185 (NTLEEGEDDDDEMDDEGEAGGAEPR) form a disordered region. Residues 164-178 (EEGEDDDDEMDDEGE) are compositionally biased toward acidic residues.

Its function is as follows. Involved in tumor formation and increases auxin and cytokinin effects in host plants. In Agrobacterium tumefaciens (strain 15955), this protein is Protein 6b (6b).